Here is a 78-residue protein sequence, read N- to C-terminus: RNA-binding protein Hfq (78 aa).

A Sm domain is found at 10 to 69 (DPFLNTLRKEHVPVSIYLVNGIKLQGQIESFDQYVVLLRNTVTQMVYKHAISTVVPARAV).

The protein belongs to the Hfq family. Homohexamer.

Its function is as follows. RNA chaperone that binds small regulatory RNA (sRNAs) and mRNAs to facilitate mRNA translational regulation in response to envelope stress, environmental stress and changes in metabolite concentrations. Also binds with high specificity to tRNAs. This chain is RNA-binding protein Hfq, found in Bordetella petrii (strain ATCC BAA-461 / DSM 12804 / CCUG 43448).